The following is a 388-amino-acid chain: CUE domain-containing protein 1 (388 aa).

The segment covering 1–10 has biased composition (low complexity); the sequence is MTSLFRRSSS. The tract at residues 1 to 45 is disordered; sequence MTSLFRRSSSGSGGGGATGARGAGTGAGDGSTAPQELNNSRPARQ. A compositionally biased stretch (gly residues) spans 11 to 29; sequence GSGGGGATGARGAGTGAGD. One can recognise a CUE domain in the interval 50 to 93; it reads EFNQAMDDFKTMFPNMDYDIIECVLRANSGAVDATIDQLLQMNL. 4 disordered regions span residues 152-178, 196-225, 270-302, and 369-388; these read PTPP…WNPP, DSIQ…ACDQ, SQKS…TVSE, and DFRG…REGQ. Polar residues predominate over residues 290–300; the sequence is VPGTSETNPTV.

In Mus musculus (Mouse), this protein is CUE domain-containing protein 1 (Cuedc1).